The chain runs to 584 residues: ATP-dependent ubiquitin transferase-like protein Cap2 (584 aa).

The E2-like domain stretch occupies residues 1-137 (MKQELHHTLL…SGTSNDVELE (137 aa)). C90 serves as the catalytic For E2-like domain. Residues 138–338 (GEFSAYWQSE…LLSRNQSRPD (201 aa)) form a linker domain region. An adenylation plus E1-like domain region spans residues 339–584 (VGNLSQKRIA…RFSGCNICDE (246 aa)). C522 serves as the catalytic For E1-like domain.

In the C-terminal section; belongs to the HesA/MoeB/ThiF family. As to quaternary structure, interacts with CD-NTase DncV in the presence and absence of phage T2. A Cap2 dimer is bound on either side by a DncV monomer.

Functionally, CD-NTase priming component of a CBASS antiviral system. CBASS (cyclic oligonucleotide-based antiphage signaling system) provides immunity against bacteriophages. The CD-NTase protein (DncV) synthesizes cyclic nucleotides in response to infection; these serve as specific second messenger signals. The signals activate a diverse range of effectors, leading to bacterial cell death and thus abortive phage infection. A type II-A(GA) CBASS system. In terms of biological role, primes DncV; acts as a protein transferase, conjugating DncV, the CD-NTase, to unidentified target(s) in the cell via an E1-E2 ubiquitin transferase-like mechanism. During the conjugation reaction DncV is probably transiently attached to AMP. Protein conjugation requires ATP. Protects E.coli against phage infection. When the CBASS operon (capV-dncV-cap2-cap3) is introduced in E.coli MG1655 there is about 100-fold protection against phages P1 and T2. When the operon is introduced in E.coli MG1655 there is a more than 10(3) decrease in the efficiency of T2 plaque formation. Protects 100-fold against phage T5, offers no protection against T7. When the operon is introduced in E.coli MG1655 it protects against phages T2, T4, T5 and T6. Another paper shows the operon confers protection against phages P1, T2, T5 and T6 but not T4 or lambda. The sequence is that of ATP-dependent ubiquitin transferase-like protein Cap2 from Vibrio cholerae serotype O1 (strain ATCC 39315 / El Tor Inaba N16961).